The following is a 199-amino-acid chain: MIIHNLGIKDYTEIWEQMKAFTAIRDSNSCDELWLLEHYPVYTQGQAGKPEHVLNPNSIKIVQSDRGGQVTYHGPGQLVAYVLMDIRRRNLGIRTLVAKLEEILISVLKHYKIPANIRSGAPGVYVGEKKIASIGLRVKNGCTYHGIALNVNMDLSPFLGINPCGFAKMEMTQMSHFHPNIQLEEVSQHFVQYFLTQFK.

The BPL/LPL catalytic domain maps to 27–199; sequence SNSCDELWLL…FVQYFLTQFK (173 aa). Residues 66 to 73, 133 to 135, and 146 to 148 contribute to the substrate site; these read RGGQVTYH, SIG, and GIA. The active-site Acyl-thioester intermediate is C164.

This sequence belongs to the LipB family.

The protein resides in the cytoplasm. It carries out the reaction octanoyl-[ACP] + L-lysyl-[protein] = N(6)-octanoyl-L-lysyl-[protein] + holo-[ACP] + H(+). It participates in protein modification; protein lipoylation via endogenous pathway; protein N(6)-(lipoyl)lysine from octanoyl-[acyl-carrier-protein]: step 1/2. Functionally, catalyzes the transfer of endogenously produced octanoic acid from octanoyl-acyl-carrier-protein onto the lipoyl domains of lipoate-dependent enzymes. Lipoyl-ACP can also act as a substrate although octanoyl-ACP is likely to be the physiological substrate. The sequence is that of Octanoyltransferase from Legionella pneumophila (strain Corby).